A 271-amino-acid chain; its full sequence is Tryptophan synthase alpha chain (271 aa).

Residues glutamate 49 and aspartate 60 each act as proton acceptor in the active site.

It belongs to the TrpA family. Tetramer of two alpha and two beta chains.

The catalysed reaction is (1S,2R)-1-C-(indol-3-yl)glycerol 3-phosphate + L-serine = D-glyceraldehyde 3-phosphate + L-tryptophan + H2O. It participates in amino-acid biosynthesis; L-tryptophan biosynthesis; L-tryptophan from chorismate: step 5/5. In terms of biological role, the alpha subunit is responsible for the aldol cleavage of indoleglycerol phosphate to indole and glyceraldehyde 3-phosphate. This Burkholderia pseudomallei (strain 1106a) protein is Tryptophan synthase alpha chain.